Consider the following 541-residue polypeptide: Arginine--tRNA ligase (541 aa).

Residues Ala-119–His-129 carry the 'HIGH' region motif.

This sequence belongs to the class-I aminoacyl-tRNA synthetase family. As to quaternary structure, monomer.

It localises to the cytoplasm. The catalysed reaction is tRNA(Arg) + L-arginine + ATP = L-arginyl-tRNA(Arg) + AMP + diphosphate. The polypeptide is Arginine--tRNA ligase (Helicobacter pylori (strain G27)).